The following is a 428-amino-acid chain: Serine--tRNA ligase (428 aa).

235-237 is a binding site for L-serine; the sequence is TAE. 266–268 serves as a coordination point for ATP; that stretch reads RSE. Glutamate 289 provides a ligand contact to L-serine. 353-356 is a binding site for ATP; sequence EISS. Serine 389 is an L-serine binding site.

It belongs to the class-II aminoacyl-tRNA synthetase family. Type-1 seryl-tRNA synthetase subfamily. In terms of assembly, homodimer. The tRNA molecule binds across the dimer.

It localises to the cytoplasm. The catalysed reaction is tRNA(Ser) + L-serine + ATP = L-seryl-tRNA(Ser) + AMP + diphosphate + H(+). The enzyme catalyses tRNA(Sec) + L-serine + ATP = L-seryl-tRNA(Sec) + AMP + diphosphate + H(+). It functions in the pathway aminoacyl-tRNA biosynthesis; selenocysteinyl-tRNA(Sec) biosynthesis; L-seryl-tRNA(Sec) from L-serine and tRNA(Sec): step 1/1. In terms of biological role, catalyzes the attachment of serine to tRNA(Ser). Is also able to aminoacylate tRNA(Sec) with serine, to form the misacylated tRNA L-seryl-tRNA(Sec), which will be further converted into selenocysteinyl-tRNA(Sec). This is Serine--tRNA ligase from Pasteurella multocida (strain Pm70).